The primary structure comprises 313 residues: Porphobilinogen deaminase (313 aa).

An S-(dipyrrolylmethanemethyl)cysteine modification is found at C241.

Belongs to the HMBS family. As to quaternary structure, monomer. The cofactor is dipyrromethane.

It carries out the reaction 4 porphobilinogen + H2O = hydroxymethylbilane + 4 NH4(+). The protein operates within porphyrin-containing compound metabolism; protoporphyrin-IX biosynthesis; coproporphyrinogen-III from 5-aminolevulinate: step 2/4. Its pathway is porphyrin-containing compound metabolism; chlorophyll biosynthesis. Its function is as follows. Tetrapolymerization of the monopyrrole PBG into the hydroxymethylbilane pre-uroporphyrinogen in several discrete steps. This is Porphobilinogen deaminase from Chlorobium phaeovibrioides (strain DSM 265 / 1930) (Prosthecochloris vibrioformis (strain DSM 265)).